The sequence spans 388 residues: Succinate--CoA ligase [ADP-forming] subunit beta (388 aa).

The 236-residue stretch at K9–Q244 folds into the ATP-grasp domain. ATP contacts are provided by residues K46, G53–G55, E99, T102, and E107. Positions 199 and 213 each coordinate Mg(2+). Residues N264 and G321 to V323 each bind substrate.

This sequence belongs to the succinate/malate CoA ligase beta subunit family. In terms of assembly, heterotetramer of two alpha and two beta subunits. Requires Mg(2+) as cofactor.

The enzyme catalyses succinate + ATP + CoA = succinyl-CoA + ADP + phosphate. It catalyses the reaction GTP + succinate + CoA = succinyl-CoA + GDP + phosphate. It participates in carbohydrate metabolism; tricarboxylic acid cycle; succinate from succinyl-CoA (ligase route): step 1/1. Functionally, succinyl-CoA synthetase functions in the citric acid cycle (TCA), coupling the hydrolysis of succinyl-CoA to the synthesis of either ATP or GTP and thus represents the only step of substrate-level phosphorylation in the TCA. The beta subunit provides nucleotide specificity of the enzyme and binds the substrate succinate, while the binding sites for coenzyme A and phosphate are found in the alpha subunit. The protein is Succinate--CoA ligase [ADP-forming] subunit beta of Salmonella arizonae (strain ATCC BAA-731 / CDC346-86 / RSK2980).